The primary structure comprises 208 residues: Ribosomal RNA large subunit methyltransferase E (208 aa).

5 residues coordinate S-adenosyl-L-methionine: glycine 63, tryptophan 65, aspartate 83, aspartate 99, and aspartate 124. Residue lysine 164 is the Proton acceptor of the active site.

This sequence belongs to the class I-like SAM-binding methyltransferase superfamily. RNA methyltransferase RlmE family.

The protein localises to the cytoplasm. It catalyses the reaction uridine(2552) in 23S rRNA + S-adenosyl-L-methionine = 2'-O-methyluridine(2552) in 23S rRNA + S-adenosyl-L-homocysteine + H(+). Its function is as follows. Specifically methylates the uridine in position 2552 of 23S rRNA at the 2'-O position of the ribose in the fully assembled 50S ribosomal subunit. This chain is Ribosomal RNA large subunit methyltransferase E, found in Salmonella paratyphi A (strain ATCC 9150 / SARB42).